We begin with the raw amino-acid sequence, 740 residues long: Catalase-peroxidase (740 aa).

A cross-link (tryptophyl-tyrosyl-methioninium (Trp-Tyr) (with M-255)) is located at residues 107 to 229 (WHAAGTYRIH…LAAVQMGLIY (123 aa)). Residue H108 is the Proton acceptor of the active site. The tryptophyl-tyrosyl-methioninium (Tyr-Met) (with W-107) cross-link spans 229-255 (YVNPEGPNGNPDPMAAAVDIRETFRRM). H270 is a binding site for heme b. The active-site Tryptophan radical intermediate is the W321.

This sequence belongs to the peroxidase family. Peroxidase/catalase subfamily. Homodimer. It depends on heme b as a cofactor. Post-translationally, formation of the three residue Trp-Tyr-Met cross-link is important for the catalase, but not the peroxidase activity of the enzyme.

The enzyme catalyses H2O2 + AH2 = A + 2 H2O. The catalysed reaction is 2 H2O2 = O2 + 2 H2O. Its function is as follows. Bifunctional enzyme with both catalase and broad-spectrum peroxidase activity, oxidizing various electron donors including NADP(H). Protects M.tuberculosis against toxic reactive oxygen species (ROS) including hydrogen peroxide as well as organic peroxides and thus contributes to its survival within host macrophages by countering the phagocyte oxidative burst. Also displays efficient peroxynitritase activity, which may help the bacterium to persist in macrophages. Functionally, catalyzes the oxidative activation of the antitubercular pro-drug isoniazid (INH) to generate an isonicotinoyl radical that then reacts nonenzymatically with NAD to form an isonicotinoyl-NAD adduct which inhibits InhA. This is Catalase-peroxidase from Mycobacterium tuberculosis (strain CDC 1551 / Oshkosh).